The chain runs to 253 residues: Vitamin B12 import ATP-binding protein BtuD (253 aa).

The ABC transporter domain maps to 4–236 (LQLSNVSVDT…NILSEVFEVD (233 aa)). ATP is bound at residue 32–39 (GPNGAGKS).

The protein belongs to the ABC transporter superfamily. Vitamin B12 importer (TC 3.A.1.13.1) family. As to quaternary structure, the complex is composed of two ATP-binding proteins (BtuD), two transmembrane proteins (BtuC) and a solute-binding protein (BtuF).

The protein localises to the cell inner membrane. It carries out the reaction an R-cob(III)alamin(out) + ATP + H2O = an R-cob(III)alamin(in) + ADP + phosphate + H(+). Part of the ABC transporter complex BtuCDF involved in vitamin B12 import. Responsible for energy coupling to the transport system. This is Vitamin B12 import ATP-binding protein BtuD from Yersinia enterocolitica serotype O:8 / biotype 1B (strain NCTC 13174 / 8081).